We begin with the raw amino-acid sequence, 214 residues long: Large ribosomal subunit protein uL4 (214 aa).

A disordered region spans residues 56 to 86; that stretch reads THKVKNRAEVSGTGKKPWKQKSTGKARAGSK. Positions 71-85 are enriched in basic residues; sequence KPWKQKSTGKARAGS.

This sequence belongs to the universal ribosomal protein uL4 family. In terms of assembly, part of the 50S ribosomal subunit.

Its function is as follows. One of the primary rRNA binding proteins, this protein initially binds near the 5'-end of the 23S rRNA. It is important during the early stages of 50S assembly. It makes multiple contacts with different domains of the 23S rRNA in the assembled 50S subunit and ribosome. Functionally, forms part of the polypeptide exit tunnel. In Mesomycoplasma hyopneumoniae (strain 232) (Mycoplasma hyopneumoniae), this protein is Large ribosomal subunit protein uL4.